The chain runs to 196 residues: Pro-FMRFamide-related neuropeptide VF (196 aa).

An N-terminal signal peptide occupies residues 1 to 21; sequence MEIISLKRFILLMLATSSLLT. Positions 22–57 are excised as a propeptide; the sequence is SNIFCTDESRIPSLYSKKNYDKYSEPRGDLGWEKER. Residue Phe-92 is modified to Phenylalanine amide. 2 consecutive propeptides follow at residues 95-99 and 115-121; these read NMEEE and NREDSLS. The residue at position 131 (Phe-131) is a Phenylalanine amide. Positions 134–196 are excised as a propeptide; sequence TIAAKSITKT…IDDAELKQEK (63 aa).

The protein belongs to the FARP (FMRFamide related peptide) family. In terms of tissue distribution, expressed in hypothalamus, where it is localized to the dorsomedial hypothalamic nucleus (DMH), paraventricular nucleus (PVN), and to neuronal projections from the PVN to the neurosecretory zone of the median eminence.

Its subcellular location is the secreted. Its function is as follows. May act in concert with kisspeptin, through opposing affects, to regulate the activity of gonadotropin-releasing hormone (GnRH) neurons across the seasons, leading to an annual change in fertility and the cyclical seasonal transition from non-breeding to breeding season. Functionally, efficiently inhibits forskolin-induced production of cAMP. Acts as a potent negative regulator of gonadotropin synthesis and secretion. Induces secretion of prolactin. Efficiently inhibits forskolin-induced production of cAMP. Blocks morphine-induced analgesia. In terms of biological role, shows no inhibitory activity of forskolin-induced production of cAMP. The polypeptide is Pro-FMRFamide-related neuropeptide VF (Ovis aries (Sheep)).